We begin with the raw amino-acid sequence, 181 residues long: Protein Syd (181 aa).

This sequence belongs to the Syd family.

The protein resides in the cell inner membrane. In terms of biological role, interacts with the SecY protein in vivo. May bind preferentially to an uncomplexed state of SecY, thus functioning either as a chelating agent for excess SecY in the cell or as a regulatory factor that negatively controls the translocase function. This Escherichia fergusonii (strain ATCC 35469 / DSM 13698 / CCUG 18766 / IAM 14443 / JCM 21226 / LMG 7866 / NBRC 102419 / NCTC 12128 / CDC 0568-73) protein is Protein Syd.